The chain runs to 133 residues: uncharacterized protein (133 aa).

The protein belongs to the mimivirus L15/L51/R83 family.

This is an uncharacterized protein from Acanthamoeba polyphaga (Amoeba).